The sequence spans 393 residues: Methylthioribose kinase (393 aa).

Residues asparagine 38, lysine 53, and 107 to 109 (EDL) contribute to the ATP site. Residue aspartate 225 coordinates substrate. Position 242–244 (242–244 (DPE)) interacts with ATP. Residue arginine 332 coordinates substrate.

It belongs to the methylthioribose kinase family. Homodimer.

The catalysed reaction is 5-(methylsulfanyl)-D-ribose + ATP = 5-(methylsulfanyl)-alpha-D-ribose 1-phosphate + ADP + H(+). The protein operates within amino-acid biosynthesis; L-methionine biosynthesis via salvage pathway; S-methyl-5-thio-alpha-D-ribose 1-phosphate from S-methyl-5'-thioadenosine (hydrolase route): step 2/2. Catalyzes the phosphorylation of methylthioribose into methylthioribose-1-phosphate. The sequence is that of Methylthioribose kinase from Bacillus anthracis (strain A0248).